The primary structure comprises 346 residues: Alkanal monooxygenase alpha chain (346 aa).

Heterodimer of an alpha and a beta chain.

It catalyses the reaction a long-chain fatty aldehyde + FMNH2 + O2 = a long-chain fatty acid + hnu + FMN + H2O + 2 H(+). Functionally, light-emitting reaction in luminous bacteria. This is Alkanal monooxygenase alpha chain (luxA) from Photobacterium phosphoreum.